A 421-amino-acid polypeptide reads, in one-letter code: Isocitrate dehydrogenase [NADP], mitochondrial (421 aa).

Residues 1 to 8 constitute a mitochondrion transit peptide; the sequence is ARAAARHY. 4 positions are modified to N6-acetyllysine: K14, K17, K36, and K38. Residues K49 and K75 each carry the N6-acetyllysine; alternate modification. Residues K49 and K75 each carry the N6-succinyllysine; alternate modification. Residues 84 to 86 and R91 contribute to the NADP(+) site; that span reads TIT. T86 provides a ligand contact to D-threo-isocitrate. Residues 103–109 and R118 each bind D-threo-isocitrate; that span reads SPNGTIR. K124 is modified (N6-acetyllysine). An N6-acetyllysine; alternate modification is found at K135. K135 is subject to N6-succinyllysine; alternate. R141 lines the D-threo-isocitrate pocket. N6-acetyllysine; alternate is present on residues K149 and K162. 2 positions are modified to N6-succinyllysine; alternate: K149 and K162. K168 carries the N6-acetyllysine modification. Position 225 is an N6-acetyllysine; alternate (K225). Residue K225 is modified to N6-succinyllysine; alternate. 4 positions are modified to N6-acetyllysine: K232, K241, K244, and K249. N6-acetyllysine; alternate is present on K251. K251 carries the post-translational modification N6-succinyllysine; alternate. D260 is a binding site for Mn(2+). K268 is an NADP(+) binding site. Residue D283 participates in Mn(2+) binding. Residues 318-323 and N336 each bind NADP(+); that span reads GTVTRH. N6-acetyllysine; alternate is present on K353. K353 carries the post-translational modification N6-succinyllysine; alternate. An N6-acetyllysine mark is found at K369, K382, and K411.

This sequence belongs to the isocitrate and isopropylmalate dehydrogenases family. In terms of assembly, homodimer. Mg(2+) is required as a cofactor. Requires Mn(2+) as cofactor. Acetylation at Lys-382 dramatically reduces catalytic activity. Deacetylated by SIRT3.

The protein resides in the mitochondrion. The catalysed reaction is D-threo-isocitrate + NADP(+) = 2-oxoglutarate + CO2 + NADPH. In terms of biological role, plays a role in intermediary metabolism and energy production. It may tightly associate or interact with the pyruvate dehydrogenase complex. This chain is Isocitrate dehydrogenase [NADP], mitochondrial (IDH2), found in Sus scrofa (Pig).